The primary structure comprises 254 residues: 5'-nucleotidase SurE (254 aa).

Aspartate 8, aspartate 9, serine 40, and asparagine 93 together coordinate a divalent metal cation.

This sequence belongs to the SurE nucleotidase family. A divalent metal cation serves as cofactor.

The protein localises to the cytoplasm. The catalysed reaction is a ribonucleoside 5'-phosphate + H2O = a ribonucleoside + phosphate. Nucleotidase that shows phosphatase activity on nucleoside 5'-monophosphates. This chain is 5'-nucleotidase SurE, found in Methylorubrum populi (strain ATCC BAA-705 / NCIMB 13946 / BJ001) (Methylobacterium populi).